The sequence spans 1471 residues: Gag-Pol polyprotein (1471 aa).

A lipid anchor (N-myristoyl glycine; by host) is attached at glycine 2. The segment at 7-31 is interaction with Gp41; that stretch reads VLSGKKTDELEKVRLRPGGKKRYCL. Positions 16-22 match the Nuclear export signal motif; it reads LEKVRLR. A Nuclear localization signal motif is present at residues 26–32; the sequence is KKRYCLK. The span at 105–114 shows a compositional bias: basic and acidic residues; it reads QRHLAADTEK. The interval 105-130 is disordered; sequence QRHLAADTEKMPATSRPTAPPSGGNY. Tyrosine 130 bears the Phosphotyrosine; by host mark. Residues 186 to 223 are interaction with human PPIA/CYPA and NUP153; sequence NCVGDHQAAMQIIREIINEEAADWDQQHPIPGPLPAGQ. Residues 274–360 are dimerization/Multimerization of capsid protein p24; that stretch reads YNPTNILDIK…GGPGQKARLM (87 aa). 2 CCHC-type zinc fingers span residues 388 to 405 and 409 to 426; these read VTCW…QCRA and QGCW…KCPE. The interval 441-508 is disordered; it reads ASQLPHDPSA…PRETLQGGDR (68 aa). Positions 484-501 are enriched in basic and acidic residues; sequence DAEKLHEDGETAEREPRE. The segment at 513 to 517 is dimerization of protease; it reads PQFSL. Residues 533–602 enclose the Peptidase A2 domain; that stretch reads EVLLDTGADD…PINIFGRNIL (70 aa). Aspartate 537 (for protease activity; shared with dimeric partner) is an active-site residue. 2 dimerization of protease regions span residues 561–567 and 600–612; these read GIGGFIN and NILN…LNFP. Residues 656-846 form the Reverse transcriptase domain; sequence GQLEEAPPTN…PFKWMGYELW (191 aa). Mg(2+)-binding residues include aspartate 721, aspartate 796, and aspartate 797. An RT 'primer grip' region spans residues 838–846; that stretch reads FKWMGYELW. Positions 1008–1024 match the Tryptophan repeat motif motif; it reads WDQWWTDYWQVTWIPEW. Residues 1044–1167 enclose the RNase H type-1 domain; that stretch reads LEKVETYYTD…VDHLVSQGIR (124 aa). Mg(2+)-binding residues include aspartate 1053, glutamate 1088, aspartate 1108, and aspartate 1159. Residues 1173 to 1214 form an Integrase-type zinc finger; that stretch reads EKIEPAQEEHEKYHGNVKELVHKFGLPQLVAKQIVNSCDKCQ. Residues histidine 1182, histidine 1186, cysteine 1210, and cysteine 1213 each contribute to the Zn(2+) site. One can recognise an Integrase catalytic domain in the interval 1224-1375; it reads VNAELGTWQM…PAERLVNMIT (152 aa). The Mg(2+) site is built by aspartate 1234, aspartate 1286, and glutamate 1322. The segment at residues 1393 to 1440 is a DNA-binding region (integrase-type); that stretch reads FQVYYREGRDQLWKGPGELLWKGEGAVLIKVGTEIKVIPRRKAKIIRH.

As to quaternary structure, homotrimer; further assembles as hexamers of trimers. Interacts with gp41 (via C-terminus). Interacts with host CALM1; this interaction induces a conformational change in the Matrix protein, triggering exposure of the myristate group. Interacts with host AP3D1; this interaction allows the polyprotein trafficking to multivesicular bodies during virus assembly. Part of the pre-integration complex (PIC) which is composed of viral genome, matrix protein, Vpr and integrase. In terms of assembly, homodimer; the homodimer further multimerizes as homohexamers or homopentamers. Interacts with human PPIA/CYPA. Interacts with human NUP153. Interacts with host PDZD8; this interaction stabilizes the capsid. Interacts with monkey TRIM5; this interaction destabilizes the capsid. Homodimer, whose active site consists of two apposed aspartic acid residues. As to quaternary structure, heterodimer of p66 RT and p51 RT (RT p66/p51). Heterodimerization of RT is essential for DNA polymerase activity. The overall folding of the subdomains is similar in p66 RT and p51 RT but the spatial arrangements of the subdomains are dramatically different. In terms of assembly, homotetramer; may further associate as a homohexadecamer. Part of the pre-integration complex (PIC) which is composed of viral genome, matrix protein, Vpr and integrase. Interacts with human SMARCB1/INI1 and human PSIP1/LEDGF isoform 1. Interacts with human KPNA3; this interaction might play a role in nuclear import of the pre-integration complex. Interacts with human NUP153; this interaction might play a role in nuclear import of the pre-integration complex. The cofactor is Mg(2+). In terms of processing, specific enzymatic cleavages by the viral protease yield mature proteins. The protease is released by autocatalytic cleavage. The polyprotein is cleaved during and after budding, this process is termed maturation. Proteolytic cleavage of p66 RT removes the RNase H domain to yield the p51 RT subunit. Nucleocapsid protein p7 might be further cleaved after virus entry.

The protein resides in the host cell membrane. The protein localises to the host endosome. It localises to the host multivesicular body. It is found in the virion membrane. Its subcellular location is the host nucleus. The protein resides in the host cytoplasm. The protein localises to the virion. It carries out the reaction Endopeptidase for which the P1 residue is preferably hydrophobic.. The catalysed reaction is Endohydrolysis of RNA in RNA/DNA hybrids. Three different cleavage modes: 1. sequence-specific internal cleavage of RNA. Human immunodeficiency virus type 1 and Moloney murine leukemia virus enzymes prefer to cleave the RNA strand one nucleotide away from the RNA-DNA junction. 2. RNA 5'-end directed cleavage 13-19 nucleotides from the RNA end. 3. DNA 3'-end directed cleavage 15-20 nucleotides away from the primer terminus.. The enzyme catalyses 3'-end directed exonucleolytic cleavage of viral RNA-DNA hybrid.. It catalyses the reaction DNA(n) + a 2'-deoxyribonucleoside 5'-triphosphate = DNA(n+1) + diphosphate. Protease: The viral protease is inhibited by many synthetic protease inhibitors (PIs), such as amprenavir, atazanavir, indinavir, loprinavir, nelfinavir, ritonavir and saquinavir. Use of protease inhibitors in tritherapy regimens permit more ambitious therapeutic strategies. Reverse transcriptase/ribonuclease H: RT can be inhibited either by nucleoside RT inhibitors (NRTIs) or by non nucleoside RT inhibitors (NNRTIs). NRTIs act as chain terminators, whereas NNRTIs inhibit DNA polymerization by binding a small hydrophobic pocket near the RT active site and inducing an allosteric change in this region. Classical NRTIs are abacavir, adefovir (PMEA), didanosine (ddI), lamivudine (3TC), stavudine (d4T), tenofovir (PMPA), zalcitabine (ddC), and zidovudine (AZT). Classical NNRTIs are atevirdine (BHAP U-87201E), delavirdine, efavirenz (DMP-266), emivirine (I-EBU), and nevirapine (BI-RG-587). The tritherapies used as a basic effective treatment of AIDS associate two NRTIs and one NNRTI. Its function is as follows. Mediates, with Gag polyprotein, the essential events in virion assembly, including binding the plasma membrane, making the protein-protein interactions necessary to create spherical particles, recruiting the viral Env proteins, and packaging the genomic RNA via direct interactions with the RNA packaging sequence (Psi). Gag-Pol polyprotein may regulate its own translation, by the binding genomic RNA in the 5'-UTR. At low concentration, the polyprotein would promote translation, whereas at high concentration, the polyprotein would encapsidate genomic RNA and then shut off translation. In terms of biological role, targets the polyprotein to the plasma membrane via a multipartite membrane-binding signal, that includes its myristoylated N-terminus. Matrix protein is part of the pre-integration complex. Implicated in the release from host cell mediated by Vpu. Binds to RNA. Functionally, forms the conical core that encapsulates the genomic RNA-nucleocapsid complex in the virion. Most core are conical, with only 7% tubular. The core is constituted by capsid protein hexamer subunits. The core is disassembled soon after virion entry. Host restriction factors such as TRIM5-alpha or TRIMCyp bind retroviral capsids and cause premature capsid disassembly, leading to blocks in reverse transcription. Capsid restriction by TRIM5 is one of the factors which restricts HIV-1 to the human species. Host PIN1 apparently facilitates the virion uncoating. On the other hand, interactions with PDZD8 or CYPA stabilize the capsid. Encapsulates and protects viral dimeric unspliced genomic RNA (gRNA). Binds these RNAs through its zinc fingers. Acts as a nucleic acid chaperone which is involved in rearangement of nucleic acid secondary structure during gRNA retrotranscription. Also facilitates template switch leading to recombination. As part of the polyprotein, participates in gRNA dimerization, packaging, tRNA incorporation and virion assembly. Its function is as follows. Aspartyl protease that mediates proteolytic cleavages of Gag and Gag-Pol polyproteins during or shortly after the release of the virion from the plasma membrane. Cleavages take place as an ordered, step-wise cascade to yield mature proteins. This process is called maturation. Displays maximal activity during the budding process just prior to particle release from the cell. Also cleaves Nef and Vif, probably concomitantly with viral structural proteins on maturation of virus particles. Hydrolyzes host EIF4GI and PABP1 in order to shut off the capped cellular mRNA translation. The resulting inhibition of cellular protein synthesis serves to ensure maximal viral gene expression and to evade host immune response. In terms of biological role, multifunctional enzyme that converts the viral RNA genome into dsDNA in the cytoplasm, shortly after virus entry into the cell. This enzyme displays a DNA polymerase activity that can copy either DNA or RNA templates, and a ribonuclease H (RNase H) activity that cleaves the RNA strand of RNA-DNA heteroduplexes in a partially processive 3' to 5' endonucleasic mode. Conversion of viral genomic RNA into dsDNA requires many steps. A tRNA(3)-Lys binds to the primer-binding site (PBS) situated at the 5'-end of the viral RNA. RT uses the 3' end of the tRNA primer to perform a short round of RNA-dependent minus-strand DNA synthesis. The reading proceeds through the U5 region and ends after the repeated (R) region which is present at both ends of viral RNA. The portion of the RNA-DNA heteroduplex is digested by the RNase H, resulting in a ssDNA product attached to the tRNA primer. This ssDNA/tRNA hybridizes with the identical R region situated at the 3' end of viral RNA. This template exchange, known as minus-strand DNA strong stop transfer, can be either intra- or intermolecular. RT uses the 3' end of this newly synthesized short ssDNA to perform the RNA-dependent minus-strand DNA synthesis of the whole template. RNase H digests the RNA template except for two polypurine tracts (PPTs) situated at the 5'-end and near the center of the genome. It is not clear if both polymerase and RNase H activities are simultaneous. RNase H probably can proceed both in a polymerase-dependent (RNA cut into small fragments by the same RT performing DNA synthesis) and a polymerase-independent mode (cleavage of remaining RNA fragments by free RTs). Secondly, RT performs DNA-directed plus-strand DNA synthesis using the PPTs that have not been removed by RNase H as primers. PPTs and tRNA primers are then removed by RNase H. The 3' and 5' ssDNA PBS regions hybridize to form a circular dsDNA intermediate. Strand displacement synthesis by RT to the PBS and PPT ends produces a blunt ended, linear dsDNA copy of the viral genome that includes long terminal repeats (LTRs) at both ends. Functionally, catalyzes viral DNA integration into the host chromosome, by performing a series of DNA cutting and joining reactions. This enzyme activity takes place after virion entry into a cell and reverse transcription of the RNA genome in dsDNA. The first step in the integration process is 3' processing. This step requires a complex comprising the viral genome, matrix protein, Vpr and integrase. This complex is called the pre-integration complex (PIC). The integrase protein removes 2 nucleotides from each 3' end of the viral DNA, leaving recessed CA OH's at the 3' ends. In the second step, the PIC enters cell nucleus. This process is mediated through integrase and Vpr proteins, and allows the virus to infect a non dividing cell. This ability to enter the nucleus is specific of lentiviruses, other retroviruses cannot and rely on cell division to access cell chromosomes. In the third step, termed strand transfer, the integrase protein joins the previously processed 3' ends to the 5' ends of strands of target cellular DNA at the site of integration. The 5'-ends are produced by integrase-catalyzed staggered cuts, 5 bp apart. A Y-shaped, gapped, recombination intermediate results, with the 5'-ends of the viral DNA strands and the 3' ends of target DNA strands remaining unjoined, flanking a gap of 5 bp. The last step is viral DNA integration into host chromosome. This involves host DNA repair synthesis in which the 5 bp gaps between the unjoined strands are filled in and then ligated. Since this process occurs at both cuts flanking the HIV genome, a 5 bp duplication of host DNA is produced at the ends of HIV-1 integration. Alternatively, Integrase may catalyze the excision of viral DNA just after strand transfer, this is termed disintegration. This chain is Gag-Pol polyprotein (gag-pol), found in Human immunodeficiency virus type 2 subtype B (isolate UC1) (HIV-2).